The chain runs to 254 residues: DNA-3-methyladenine glycosylase (254 aa).

Over residues 1-10 (MKTPARRSKR) the composition is skewed to basic residues. The disordered stretch occupies residues 1-20 (MKTPARRSKRVNQEESETNV).

This sequence belongs to the DNA glycosylase MPG family.

The protein resides in the nucleus. It carries out the reaction Hydrolysis of alkylated DNA, releasing 3-methyladenine, 3-methylguanine, 7-methylguanine and 7-methyladenine.. Its function is as follows. Hydrolysis of the deoxyribose N-glycosidic bond to excise 3-methyladenine, and 7-methylguanine from the damaged DNA polymer formed by alkylation lesions. In Arabidopsis thaliana (Mouse-ear cress), this protein is DNA-3-methyladenine glycosylase (MAG).